Reading from the N-terminus, the 213-residue chain is Large ribosomal subunit protein uL3 (213 aa).

N5-methylglutamine is present on Gln-151.

The protein belongs to the universal ribosomal protein uL3 family. In terms of assembly, part of the 50S ribosomal subunit. Forms a cluster with proteins L14 and L19. Methylated by PrmB.

In terms of biological role, one of the primary rRNA binding proteins, it binds directly near the 3'-end of the 23S rRNA, where it nucleates assembly of the 50S subunit. The chain is Large ribosomal subunit protein uL3 from Allorhizobium ampelinum (strain ATCC BAA-846 / DSM 112012 / S4) (Agrobacterium vitis (strain S4)).